The sequence spans 411 residues: Tyrosine--tRNA ligase (411 aa).

Residues 50–59 carry the 'HIGH' region motif; the sequence is PTRPDLHLGH. The short motif at 236–240 is the 'KMSKS' region element; the sequence is KMSKS. Position 239 (Lys-239) interacts with ATP. The S4 RNA-binding domain maps to 345–409; it reads VSMAKLVVLA…GKDKFARLVL (65 aa).

The protein belongs to the class-I aminoacyl-tRNA synthetase family. TyrS type 2 subfamily. In terms of assembly, homodimer.

It localises to the cytoplasm. It carries out the reaction tRNA(Tyr) + L-tyrosine + ATP = L-tyrosyl-tRNA(Tyr) + AMP + diphosphate + H(+). Catalyzes the attachment of tyrosine to tRNA(Tyr) in a two-step reaction: tyrosine is first activated by ATP to form Tyr-AMP and then transferred to the acceptor end of tRNA(Tyr). The polypeptide is Tyrosine--tRNA ligase (Deinococcus radiodurans (strain ATCC 13939 / DSM 20539 / JCM 16871 / CCUG 27074 / LMG 4051 / NBRC 15346 / NCIMB 9279 / VKM B-1422 / R1)).